We begin with the raw amino-acid sequence, 180 residues long: Transcription factor IBH1-like 1 (180 aa).

In terms of domain architecture, bHLH spans 110–160; sequence KSKSASEEAAAKAKRLVKRRTQGLRNVVPGGELMSNDVLLLQETLDYIVSL.

Belongs to the bHLH protein family.

It localises to the nucleus. Functionally, functions redundandly with IBH1/BHLH158 in a regulation node known as the incoherent feed-forward loop (FFL). Acts as transcriptional repressor that negatively regulates cell and organ elongation in response to gibberellin (GA) and brassinosteroid (BR) signaling. In Arabidopsis thaliana (Mouse-ear cress), this protein is Transcription factor IBH1-like 1.